The chain runs to 459 residues: Probable PTS system sucrose-specific EIIBC component (459 aa).

The region spanning 1–86 is the PTS EIIB type-1 domain; the sequence is MHKEIAKELL…VHVWETAPSE (86 aa). Residue Cys-25 is the Phosphocysteine intermediate; for EIIB activity of the active site. Positions 106–459 constitute a PTS EIIC type-1 domain; it reads KTLSDIFVPI…LFLGFKEETE (354 aa). The next 11 helical transmembrane spans lie at 111-131, 147-167, 177-197, 209-229, 245-265, 288-308, 329-349, 360-380, 388-408, 412-432, and 434-454; these read IFVPIIPAITASGLLMGLIGM, MLDLVSSTAFILLPILVGFSA, LGAVIAGLLTHPDLLDPSMLG, LHIPMMGYQGSMIPILLSVFV, LDVVIIPFITVMVTGCLALIV, AGIAAGALFGGIYSTIVLSGL, FLVPIWSMANVAQGGAGLAVF, IALPASLTAFLGIVEPIVFGV, FIGAAIGGAIGGAYVVAVQVV, YGLTGIPMISIVLPFGAANFV, and YMIGFLIAAVSAFIATLFLGF.

Its subcellular location is the cell membrane. Its function is as follows. The phosphoenolpyruvate-dependent sugar phosphotransferase system (sugar PTS), a major carbohydrate active -transport system, catalyzes the phosphorylation of incoming sugar substrates concomitantly with their translocation across the cell membrane. This system may be involved in sucrose transport. The EIIB domain is mainly phosphorylated by the EIIA domains of GamP and PtsA/YpqE. Negatively regulates SacY activity by catalyzing its phosphorylation on 'His-99'. The protein is Probable PTS system sucrose-specific EIIBC component (sacX) of Bacillus subtilis (strain 168).